Reading from the N-terminus, the 140-residue chain is Large ribosomal subunit protein uL11 (140 aa).

The protein belongs to the universal ribosomal protein uL11 family. As to quaternary structure, part of the ribosomal stalk of the 50S ribosomal subunit. Interacts with L10 and the large rRNA to form the base of the stalk. L10 forms an elongated spine to which L12 dimers bind in a sequential fashion forming a multimeric L10(L12)X complex. In terms of processing, one or more lysine residues are methylated.

In terms of biological role, forms part of the ribosomal stalk which helps the ribosome interact with GTP-bound translation factors. The protein is Large ribosomal subunit protein uL11 of Staphylococcus aureus (strain Mu3 / ATCC 700698).